Reading from the N-terminus, the 255-residue chain is tRNA (guanine-N(7)-)-methyltransferase (255 aa).

Residues 1-11 (MSISDNSRDQL) show a composition bias toward basic and acidic residues. A disordered region spans residues 1–25 (MSISDNSRDQLGELPAGRPLQSDFD). S-adenosyl-L-methionine-binding residues include glutamate 83, glutamate 108, aspartate 135, and aspartate 158. Aspartate 158 is a catalytic residue. A substrate-binding site is contributed by lysine 162. An interaction with RNA region spans residues 164–169 (RHNKRR). Substrate contacts are provided by residues aspartate 194 and 232-235 (TKFE).

This sequence belongs to the class I-like SAM-binding methyltransferase superfamily. TrmB family.

It catalyses the reaction guanosine(46) in tRNA + S-adenosyl-L-methionine = N(7)-methylguanosine(46) in tRNA + S-adenosyl-L-homocysteine. The protein operates within tRNA modification; N(7)-methylguanine-tRNA biosynthesis. Its function is as follows. Catalyzes the formation of N(7)-methylguanine at position 46 (m7G46) in tRNA. This chain is tRNA (guanine-N(7)-)-methyltransferase, found in Corynebacterium glutamicum (strain ATCC 13032 / DSM 20300 / JCM 1318 / BCRC 11384 / CCUG 27702 / LMG 3730 / NBRC 12168 / NCIMB 10025 / NRRL B-2784 / 534).